The chain runs to 212 residues: MTLGLVGRKLGMTRVFTEDGVSIPVTVIEVEANRVTQLKTLETDGYTAVQVTTGVKKASRLTKAEAGHFAKAEVEAGRGLWEFRLNDGEGADLTVGSELKVDIFADVKKADVTGISKGKGFAGVVKRWNFRTQDMTHGNSRSHRVPGSIGQNQSPGKVFKGKKMAGHLGCERVTVQSLDIVRVDVERNLLLIKGAVPGATNGDVIVKPAVKA.

Positions 135–156 (MTHGNSRSHRVPGSIGQNQSPG) are disordered. Gln-153 bears the N5-methylglutamine mark.

This sequence belongs to the universal ribosomal protein uL3 family. As to quaternary structure, part of the 50S ribosomal subunit. Forms a cluster with proteins L14 and L19. Post-translationally, methylated by PrmB.

In terms of biological role, one of the primary rRNA binding proteins, it binds directly near the 3'-end of the 23S rRNA, where it nucleates assembly of the 50S subunit. The protein is Large ribosomal subunit protein uL3 of Tolumonas auensis (strain DSM 9187 / NBRC 110442 / TA 4).